A 570-amino-acid chain; its full sequence is Biotin biosynthesis bifunctional protein BioHC (570 aa).

Positions 1-29 are disordered; sequence MTEVNVRAAATPEEKPFLNRTRHEPANPQ. The interval 1-279 is carboxylesterase; the sequence is MTEVNVRAAA…HISHPREVAT (279 aa). A compositionally biased stretch (basic and acidic residues) spans 12 to 25; sequence PEEKPFLNRTRHEP. Residues W41, 105–106, and 175–179 each bind substrate; these read SL and FIALQ. The Nucleophile role is filled by S105. Catalysis depends on residues D239 and H267. Residue H267 coordinates substrate. Residues 280–570 are malonyl-ACP O-methyltransferase; sequence MINSFLRQQA…RKPLDESASA (291 aa).

This sequence in the N-terminal section; belongs to the AB hydrolase superfamily. Carboxylesterase BioH family. The protein in the C-terminal section; belongs to the methyltransferase superfamily.

The enzyme catalyses a carboxylic ester + H2O = an alcohol + a carboxylate + H(+). The catalysed reaction is malonyl-[ACP] + S-adenosyl-L-methionine = malonyl-[ACP] methyl ester + S-adenosyl-L-homocysteine. It participates in cofactor biosynthesis; biotin biosynthesis. In terms of biological role, converts the free carboxyl group of a malonyl-thioester to its methyl ester by transfer of a methyl group from S-adenosyl-L-methionine (SAM). It allows to synthesize pimeloyl-ACP via the fatty acid synthetic pathway. Its function is as follows. The physiological role of BioH is to remove the methyl group introduced by BioC when the pimeloyl moiety is complete. It allows to synthesize pimeloyl-ACP via the fatty acid synthetic pathway through the hydrolysis of the ester bonds of pimeloyl-ACP esters. This chain is Biotin biosynthesis bifunctional protein BioHC (bioC), found in Teredinibacter turnerae (strain ATCC 39867 / T7901).